Consider the following 166-residue polypeptide: Large ribosomal subunit protein eL14 (166 aa).

The interval 135–166 is disordered; that stretch reads KADGTPRVLKKDRRERLRAEKAKGGKKAAAKK. Basic and acidic residues predominate over residues 146–157; it reads DRRERLRAEKAK.

The protein belongs to the eukaryotic ribosomal protein eL14 family.

This is Large ribosomal subunit protein eL14 (RpL14) from Drosophila melanogaster (Fruit fly).